Consider the following 149-residue polypeptide: 3-dehydroquinate dehydratase (149 aa).

Tyr-26 serves as the catalytic Proton acceptor. Substrate-binding residues include Asn-78, His-84, and Asp-91. The Proton donor role is filled by His-104. Substrate-binding positions include 105–106 (LS) and Arg-115.

This sequence belongs to the type-II 3-dehydroquinase family. As to quaternary structure, homododecamer.

It catalyses the reaction 3-dehydroquinate = 3-dehydroshikimate + H2O. The protein operates within metabolic intermediate biosynthesis; chorismate biosynthesis; chorismate from D-erythrose 4-phosphate and phosphoenolpyruvate: step 3/7. Functionally, catalyzes a trans-dehydration via an enolate intermediate. This chain is 3-dehydroquinate dehydratase, found in Polynucleobacter necessarius subsp. necessarius (strain STIR1).